Reading from the N-terminus, the 379-residue chain is Spermatogenesis-associated protein 17 (379 aa).

3 IQ domains span residues 48 to 77 (ENDAAVMIQSWFRGCQVRAYMRHLNRVVTI), 71 to 100 (LNRVVTIIQKWWRSYLGRKFYQLVVEAAYY), and 107 to 136 (YNEMAVRIQRRWRGFRIRKYCFNYYYLKEY).

As to expression, strongly expressed in adult testis but weakly expressed in the spleen and thymus. Strongly expressed in round and elongating spermatids, and weakly or not expressed in spermatozoa.

It is found in the cytoplasm. The protein is Spermatogenesis-associated protein 17 (Spata17) of Mus musculus (Mouse).